Here is a 306-residue protein sequence, read N- to C-terminus: D-alanine--D-alanine ligase (306 aa).

Residues 101–303 (KLLWQGAGLP…FSQLVVRILE (203 aa)) enclose the ATP-grasp domain. 134 to 189 (ISALGLPLIVKPSREGSSVGMTKVVEENALQGALSLAFQHDDEILIEKWLCGPEFT) contributes to the ATP binding site. Positions 257, 270, and 272 each coordinate Mg(2+).

It belongs to the D-alanine--D-alanine ligase family. Mg(2+) serves as cofactor. Requires Mn(2+) as cofactor.

The protein resides in the cytoplasm. The catalysed reaction is 2 D-alanine + ATP = D-alanyl-D-alanine + ADP + phosphate + H(+). It functions in the pathway cell wall biogenesis; peptidoglycan biosynthesis. Cell wall formation. The sequence is that of D-alanine--D-alanine ligase from Salmonella paratyphi A (strain ATCC 9150 / SARB42).